We begin with the raw amino-acid sequence, 403 residues long: Poly(rC)-binding protein 4 (403 aa).

3 KH domains span residues T17 to G67, P101 to G154, and T241 to G293.

It is found in the cytoplasm. Single-stranded nucleic acid binding protein that binds preferentially to oligo dC. This Homo sapiens (Human) protein is Poly(rC)-binding protein 4 (PCBP4).